The sequence spans 271 residues: MERYQQLFKQLAAKKEGAFVPFVQLGDPSPAMSLNIIDTLIAAGADALELGIPFSDPLADGPTIQNAALRAFAAGVTPGICFEILAEIRQKHPTIPIGLLMYANLVFHNGIDHFYQRCAEVGVDSVLIADVPFEESAPFRAAALRHGIAPIFICPPNADDDLLREIASHGRGYTYLLSRAGVTGAENHGQLPLNHLVDKLREYNAAPALQGFGISEPAQVKASLAAGAAGAAGAISGSAIVKIIEKNVAQPVEMLVQLTRFVTEMKAATRS.

Active-site proton acceptor residues include E49 and D60.

The protein belongs to the TrpA family. Tetramer of two alpha and two beta chains.

The enzyme catalyses (1S,2R)-1-C-(indol-3-yl)glycerol 3-phosphate + L-serine = D-glyceraldehyde 3-phosphate + L-tryptophan + H2O. It participates in amino-acid biosynthesis; L-tryptophan biosynthesis; L-tryptophan from chorismate: step 5/5. Its function is as follows. The alpha subunit is responsible for the aldol cleavage of indoleglycerol phosphate to indole and glyceraldehyde 3-phosphate. This chain is Tryptophan synthase alpha chain, found in Yersinia pestis bv. Antiqua (strain Angola).